The following is a 554-amino-acid chain: Phenylalanine--tRNA ligase beta subunit (554 aa).

The region spanning 276–351 is the B5 domain; it reads LTPKSRIISV…INYGYEKFDG (76 aa). 4 residues coordinate Mg(2+): Asp329, Asp335, Glu338, and Glu339.

This sequence belongs to the phenylalanyl-tRNA synthetase beta subunit family. Type 2 subfamily. As to quaternary structure, tetramer of two alpha and two beta subunits. Mg(2+) serves as cofactor.

It is found in the cytoplasm. The catalysed reaction is tRNA(Phe) + L-phenylalanine + ATP = L-phenylalanyl-tRNA(Phe) + AMP + diphosphate + H(+). This is Phenylalanine--tRNA ligase beta subunit from Methanococcus maripaludis (strain DSM 14266 / JCM 13030 / NBRC 101832 / S2 / LL).